Consider the following 909-residue polypeptide: Protein translocase subunit SecA (909 aa).

ATP is bound by residues Q85, 103–107, and D512; that span reads GEGKT. The segment at 866 to 899 is disordered; it reads HETSATGGEEEINKPVVKGKKIGRNDPCPCGSGK. C893, C895, C904, and C905 together coordinate Zn(2+).

It belongs to the SecA family. Monomer and homodimer. Part of the essential Sec protein translocation apparatus which comprises SecA, SecYEG and auxiliary proteins SecDF. Other proteins may also be involved. The cofactor is Zn(2+).

Its subcellular location is the cell membrane. The protein localises to the cytoplasm. The enzyme catalyses ATP + H2O + cellular proteinSide 1 = ADP + phosphate + cellular proteinSide 2.. Part of the Sec protein translocase complex. Interacts with the SecYEG preprotein conducting channel. Has a central role in coupling the hydrolysis of ATP to the transfer of proteins into and across the cell membrane, serving as an ATP-driven molecular motor driving the stepwise translocation of polypeptide chains across the membrane. The polypeptide is Protein translocase subunit SecA (Finegoldia magna (strain ATCC 29328 / DSM 20472 / WAL 2508) (Peptostreptococcus magnus)).